We begin with the raw amino-acid sequence, 347 residues long: Violet-sensitive opsin (347 aa).

The Extracellular segment spans residues 1-31 (MLEEEDFYLFKNVSNVSPFDGPQYHIAPKWA). N-linked (GlcNAc...) asparagine glycosylation occurs at asparagine 12. The helical transmembrane segment at 32 to 56 (FTLQAIFMGMVFLIGTPLNFIVLLV) threads the bilayer. Residues 57–68 (TIKYKKLRQPLN) lie on the Cytoplasmic side of the membrane. The chain crosses the membrane as a helical span at residues 69 to 94 (YILVNITVGGFLMCIFSIFPVFVSSS). Topologically, residues 95 to 108 (QGYFFFGRIACSID) are extracellular. A disulfide bridge connects residues cysteine 105 and cysteine 182. A helical transmembrane segment spans residues 109–128 (AFVGTLTGLVTGWSLAFLAF). Topologically, residues 129–147 (ERYIVICKPMGNFNFSSSH) are cytoplasmic. A helical transmembrane segment spans residues 148–171 (ALAVVICTWIIGIVVSVPPFLGWS). Over 172–197 (RYMPEGLQCSCGPDWYTVGTKYRSEY) the chain is Extracellular. A helical transmembrane segment spans residues 198 to 225 (YTWFIFIFCFVIPLSLICFSYGRLLGAL). The Cytoplasmic portion of the chain corresponds to 226–247 (RAVAAQQQESASTQKAEREVSR). The helical transmembrane segment at 248–271 (MVIFMVGSFCLCYVPYAAMAMYMV) threads the bilayer. At 272–279 (TNRNHGLD) the chain is on the extracellular side. A helical membrane pass occupies residues 280–304 (LRLVTIPAFFSKSSCVYNPIIYSFM). Residue lysine 291 is modified to N6-(retinylidene)lysine. Residues 305-347 (NKQFRGCIMETVCGRPMSDDSSVSSTSQRTEVSTVSSSQVSPA) lie on the Cytoplasmic side of the membrane. Residues 323–347 (DDSSVSSTSQRTEVSTVSSSQVSPA) form a disordered region.

The protein belongs to the G-protein coupled receptor 1 family. Opsin subfamily. Post-translationally, phosphorylated on some or all of the serine and threonine residues present in the C-terminal region. The color pigments are found in the cone photoreceptor cells.

It localises to the membrane. In terms of biological role, visual pigments are the light-absorbing molecules that mediate vision. They consist of an apoprotein, opsin, covalently linked to cis-retinal. The chain is Violet-sensitive opsin from Xenopus laevis (African clawed frog).